Here is a 592-residue protein sequence, read N- to C-terminus: 1,4-alpha-glucan branching enzyme GlgB 2 (592 aa).

Residue Asp-274 is the Nucleophile of the active site. Glu-327 functions as the Proton donor in the catalytic mechanism.

This sequence belongs to the glycosyl hydrolase 13 family. GlgB subfamily. In terms of assembly, monomer.

It carries out the reaction Transfers a segment of a (1-&gt;4)-alpha-D-glucan chain to a primary hydroxy group in a similar glucan chain.. Its pathway is glycan biosynthesis; glycogen biosynthesis. In terms of biological role, catalyzes the formation of the alpha-1,6-glucosidic linkages in glycogen by scission of a 1,4-alpha-linked oligosaccharide from growing alpha-1,4-glucan chains and the subsequent attachment of the oligosaccharide to the alpha-1,6 position. The chain is 1,4-alpha-glucan branching enzyme GlgB 2 from Streptomyces avermitilis (strain ATCC 31267 / DSM 46492 / JCM 5070 / NBRC 14893 / NCIMB 12804 / NRRL 8165 / MA-4680).